Reading from the N-terminus, the 774-residue chain is DNA ligase 3 (774 aa).

The disordered stretch occupies residues methionine 1–asparagine 25. Lysine 433 (N6-AMP-lysine intermediate) is an active-site residue.

It belongs to the ATP-dependent DNA ligase family.

The protein resides in the nucleus. It catalyses the reaction ATP + (deoxyribonucleotide)n-3'-hydroxyl + 5'-phospho-(deoxyribonucleotide)m = (deoxyribonucleotide)n+m + AMP + diphosphate.. In Schizosaccharomyces pombe (strain 972 / ATCC 24843) (Fission yeast), this protein is DNA ligase 3 (adl1).